The chain runs to 228 residues: Translation initiation factor 6 (228 aa).

It belongs to the eIF-6 family.

Its function is as follows. Binds to the 50S ribosomal subunit and prevents its association with the 30S ribosomal subunit to form the 70S initiation complex. In Thermococcus onnurineus (strain NA1), this protein is Translation initiation factor 6.